The chain runs to 892 residues: Alpha-actinin-1 (892 aa).

Met-1 is subject to N-acetylmethionine. The actin-binding stretch occupies residues 1 to 247 (MDHYDSQQTN…IMTYVSSFYH (247 aa)). Residue Ser-6 is modified to Phosphoserine. Phosphotyrosine; by FAK1 is present on Tyr-12. Calponin-homology (CH) domains lie at 31 to 135 (KQQR…LRFA) and 144 to 250 (TSAK…HAFS). Residues Lys-95 and Lys-195 each carry the N6-acetyllysine modification. Spectrin repeat units lie at residues 274 to 384 (QLME…WLLN), 394 to 499 (HLAE…ALER), 509 to 620 (QLYL…ALTE), and 630 to 733 (RLRK…EVEN). The segment at 274–733 (QLMEDYEKLA…IARTINEVEN (460 aa)) is interaction with DDN. Ser-471 carries the post-translational modification Phosphoserine. An N6-acetyllysine modification is found at Lys-676. Ser-677 bears the Phosphoserine mark. EF-hand domains lie at 746 to 781 (EQMNEFRASFNHFDRDHSGTLGPEEFKACLISLGYD) and 787 to 822 (QGEAEFARIMSIVDPNRLGVVTFQAFIDFMSRETAD). 5 residues coordinate Ca(2+): Asp-759, Asp-761, Ser-763, Thr-765, and Glu-770. Ser-890 carries the post-translational modification Phosphoserine.

Belongs to the alpha-actinin family. In terms of assembly, homodimer; antiparallel. Interacts with MYOZ2, TTID and LPP. Interacts with DDN. Interacts with PSD. Interacts with MICALL2. Interacts with DNM2 and CTTN. Interacts with PDLIM1. Interacts with PDLIM2. Interacts with PDLIM4 (via PDZ domain). Interacts with IGSF8.

Its subcellular location is the cytoplasm. It localises to the cytoskeleton. It is found in the myofibril. The protein resides in the sarcomere. The protein localises to the z line. Its subcellular location is the cell membrane. It localises to the cell junction. It is found in the cell projection. The protein resides in the ruffle. Functionally, F-actin cross-linking protein which is thought to anchor actin to a variety of intracellular structures. Association with IGSF8 regulates the immune synapse formation and is required for efficient T-cell activation. The sequence is that of Alpha-actinin-1 (Actn1) from Mus musculus (Mouse).